The primary structure comprises 350 residues: Outer membrane protein A (350 aa).

A signal peptide spans 1-21; it reads MKKTAIAIAVALAGFATVAQA. The next 8 membrane-spanning stretches (beta stranded) occupy residues 27-37, 59-70, 74-82, 100-111, 116-124, 146-155, 160-167, and 186-194; these read TWYAGGKLGWS, QLGAGAFGGYQV, LGFEMGYDW, QAVQLTAKLGYP, LDIYTRLGG, PVFAGGVEWA, IATRLEYQ, and MLSVGVSYR. 4 consecutive repeat copies span residues 205–206, 207–208, 209–210, and 211–212. Positions 205–212 are 4 X 2 AA tandem repeats of A-P; sequence APAPAPAP. The region spanning 214–342 is the OmpA-like domain; it reads VTTKTFTLKS…RVAIEVKGYK (129 aa). Cys-315 and Cys-327 are joined by a disulfide.

This sequence belongs to the outer membrane OOP (TC 1.B.6) superfamily. OmpA family. Monomer and homodimer.

It localises to the cell outer membrane. Functionally, with TolR probably plays a role in maintaining the position of the peptidoglycan cell wall in the periplasm. Acts as a porin with low permeability that allows slow penetration of small solutes; an internal gate slows down solute passage. Its function is as follows. Required for conjugation with F-type plasmids; probably serves as the mating receptor on recipient cells. The polypeptide is Outer membrane protein A (Klebsiella aerogenes (Enterobacter aerogenes)).